The primary structure comprises 294 residues: Diaminopimelate epimerase (294 aa).

Residues Asn13, Gln46, and Asn69 each contribute to the substrate site. Cys78 serves as the catalytic Proton donor. Residues Gly79 to Asn80, Asn173, Asn206, and Glu224 to Arg225 each bind substrate. Cys233 acts as the Proton acceptor in catalysis. Gly234–Thr235 contributes to the substrate binding site.

Belongs to the diaminopimelate epimerase family. Homodimer.

Its subcellular location is the cytoplasm. It catalyses the reaction (2S,6S)-2,6-diaminopimelate = meso-2,6-diaminopimelate. Its pathway is amino-acid biosynthesis; L-lysine biosynthesis via DAP pathway; DL-2,6-diaminopimelate from LL-2,6-diaminopimelate: step 1/1. Functionally, catalyzes the stereoinversion of LL-2,6-diaminopimelate (L,L-DAP) to meso-diaminopimelate (meso-DAP), a precursor of L-lysine and an essential component of the bacterial peptidoglycan. In Variovorax paradoxus (strain S110), this protein is Diaminopimelate epimerase.